Consider the following 196-residue polypeptide: Late protein I196L (196 aa).

Repeat copies occupy residues 28–48 (SIYL…PTTS) and 49–70 (SNSL…TTTS). One copy of the 3; approximate repeat lies at 71-92 (SNYLTSAISTNISDKEEDTPFS).

The protein belongs to the asfivirus I196L family.

This is Late protein I196L from African swine fever virus (isolate Warthog/Namibia/Wart80/1980) (ASFV).